The following is a 488-amino-acid chain: Beta-amylase (488 aa).

Substrate-binding residues include Asp-51, His-91, and Asp-99. Glu-184 functions as the Proton donor in the catalytic mechanism. The substrate site is built by Lys-293, His-298, and Thr-340. The active-site Proton acceptor is the Glu-378. Substrate contacts are provided by residues 379-380 (NA) and Arg-418.

The protein belongs to the glycosyl hydrolase 14 family.

It catalyses the reaction Hydrolysis of (1-&gt;4)-alpha-D-glucosidic linkages in polysaccharides so as to remove successive maltose units from the non-reducing ends of the chains.. The sequence is that of Beta-amylase (BMY1) from Zea mays (Maize).